A 302-amino-acid polypeptide reads, in one-letter code: NADH-cytochrome b5 reductase 2 (302 aa).

The propeptide at Met1 to Asn41 is removed in mature form. A helical transmembrane segment spans residues Ala12 to Asn32. The 105-residue stretch at Asp51–Gln155 folds into the FAD-binding FR-type domain. Gln158–Leu193 contributes to the FAD binding site. Ser278 carries the phosphoserine modification.

It belongs to the flavoprotein pyridine nucleotide cytochrome reductase family. It depends on FAD as a cofactor. There are two isoforms of NADH-cytochrome b5 reductase, a 34 kDa form (p34) and a 32 kDa form (p32). The p34 form becomes firmly anchored to the outer mitochondrial membrane after an incomplete translocation arrest. The p32 form is formed after translocation of the p34 precursor to the inner mitochondrial membrane, where it is processed by mitochondrial inner membrane peptidase (IMP) complex and released to the intermembrane space.

Its subcellular location is the mitochondrion intermembrane space. The protein resides in the mitochondrion outer membrane. The enzyme catalyses 2 Fe(III)-[cytochrome b5] + NADH = 2 Fe(II)-[cytochrome b5] + NAD(+) + H(+). In terms of biological role, the outer membrane form may mediate the reduction of outer membrane cytochrome b5, and the soluble inter-membrane space form may transfer electrons from external NADH to cytochrome c, thereby mediating an antimycin-insensitive, energy-coupled oxidation of external NADH by yeast mitochondria. Involved in the reduction of D-erythroascorbyl free radicals. The sequence is that of NADH-cytochrome b5 reductase 2 (MCR1) from Saccharomyces cerevisiae (strain YJM789) (Baker's yeast).